Reading from the N-terminus, the 327-residue chain is 2-methoxy-6-polyprenyl-1,4-benzoquinol methylase, mitochondrial (327 aa).

The N-terminal 49 residues, 1–49 (MAAPRSCVLWSYCGHGWSRLAGDCRLPGFRRSWLGATLSARSLSQEKRA), are a transit peptide targeting the mitochondrion. S-adenosyl-L-methionine is bound by residues threonine 117, aspartate 171, and 199-200 (DA).

The protein belongs to the class I-like SAM-binding methyltransferase superfamily. MenG/UbiE family. Component of a multi-subunit COQ enzyme complex, composed of at least COQ3, COQ4, COQ5, COQ6, COQ7 and COQ9. Interacts with PYURF; the interaction is direct, stabilizes COQ5 protein and associates PYURF with COQ enzyme complex.

It is found in the mitochondrion inner membrane. It catalyses the reaction 2-methoxy-6-(all-trans-decaprenyl)benzene-1,4-diol + S-adenosyl-L-methionine = 5-methoxy-2-methyl-3-(all-trans-decaprenyl)benzene-1,4-diol + S-adenosyl-L-homocysteine + H(+). The protein operates within cofactor biosynthesis; ubiquinone biosynthesis. Its function is as follows. Methyltransferase required for the conversion of 2-decaprenyl-6-methoxy-1,4-benzoquinol (DDMQH2) to 2-decaprenyl-3-methyl-6-methoxy-1,4-benzoquinol (DMQH2). The sequence is that of 2-methoxy-6-polyprenyl-1,4-benzoquinol methylase, mitochondrial from Rattus norvegicus (Rat).